The following is a 435-amino-acid chain: 5-methylthioadenosine/S-adenosylhomocysteine deaminase (435 aa).

Residues H65 and H67 each coordinate Zn(2+). Residues E94, R150, and H189 each contribute to the substrate site. H216 lines the Zn(2+) pocket. The substrate site is built by E219 and D304. Zn(2+) is bound at residue D304.

The protein belongs to the metallo-dependent hydrolases superfamily. MTA/SAH deaminase family. Zn(2+) is required as a cofactor.

The enzyme catalyses S-adenosyl-L-homocysteine + H2O + H(+) = S-inosyl-L-homocysteine + NH4(+). It carries out the reaction S-methyl-5'-thioadenosine + H2O + H(+) = S-methyl-5'-thioinosine + NH4(+). Functionally, catalyzes the deamination of 5-methylthioadenosine and S-adenosyl-L-homocysteine into 5-methylthioinosine and S-inosyl-L-homocysteine, respectively. Is also able to deaminate adenosine. In Bacillus cereus (strain ZK / E33L), this protein is 5-methylthioadenosine/S-adenosylhomocysteine deaminase.